A 342-amino-acid polypeptide reads, in one-letter code: Probable deoxyhypusine synthase (342 aa).

Lysine 307 (nucleophile) is an active-site residue.

It belongs to the deoxyhypusine synthase family. It depends on NAD(+) as a cofactor.

It carries out the reaction [eIF5A protein]-L-lysine + spermidine = [eIF5A protein]-deoxyhypusine + propane-1,3-diamine. It participates in protein modification; eIF5A hypusination. In terms of biological role, catalyzes the NAD-dependent oxidative cleavage of spermidine and the subsequent transfer of the butylamine moiety of spermidine to the epsilon-amino group of a specific lysine residue of the eIF-5A precursor protein to form the intermediate deoxyhypusine residue. This is Probable deoxyhypusine synthase (dys) from Pyrococcus horikoshii (strain ATCC 700860 / DSM 12428 / JCM 9974 / NBRC 100139 / OT-3).